The chain runs to 494 residues: GTPase Der (494 aa).

EngA-type G domains are found at residues 3–166 (PVVA…AEQM) and 206–379 (IKLA…RSAT). Residues 9–16 (GRPNVGKS), 56–60 (DTGGI), 118–121 (NKVD), 212–219 (GRPNVGKS), 259–263 (DTAGV), and 324–327 (NKWD) contribute to the GTP site. Positions 380–464 (TRVGTSVLTR…PIRIQFQNSE (85 aa)) constitute a KH-like domain.

This sequence belongs to the TRAFAC class TrmE-Era-EngA-EngB-Septin-like GTPase superfamily. EngA (Der) GTPase family. Associates with the 50S ribosomal subunit.

Its function is as follows. GTPase that plays an essential role in the late steps of ribosome biogenesis. The chain is GTPase Der from Vibrio cholerae serotype O1 (strain ATCC 39541 / Classical Ogawa 395 / O395).